Reading from the N-terminus, the 488-residue chain is (Z)-2-((N-methylformamido)methylene)-5-hydroxybutyrolactone dehydrogenase (488 aa).

NAD(+)-binding positions include 149 to 150 (WN) and 226 to 227 (GG). Glu248 acts as the Proton acceptor in catalysis. An NAD(+)-binding site is contributed by Leu249. Cys282 acts as the Nucleophile in catalysis. Glu380 serves as a coordination point for NAD(+).

This sequence belongs to the aldehyde dehydrogenase family. As to quaternary structure, homodimer.

It catalyses the reaction (Z)-2-((N-methylformamido)methylene)-5-hydroxybutanolactone + NAD(+) + H2O = (E)-2-((N-methylformamido) methylene)succinate + NADH + 3 H(+). Its function is as follows. Involved in the degradation of the pyridine ring of trigonelline (TG; N-methylnicotinate) into succinate and methylamine as carbon and nitrogen sources, respectively. Catalyzes the NAD(+)-dependent oxidation of (Z)-2-((N-methylformamido)methylene)-5-hydroxybutyrolactone (MFMB) to yield (E)-2-((N-methylformamido)methylene)succinate (MFMS). The chain is (Z)-2-((N-methylformamido)methylene)-5-hydroxybutyrolactone dehydrogenase from Acinetobacter baylyi (strain ATCC 33305 / BD413 / ADP1).